Reading from the N-terminus, the 201-residue chain is Small ribosomal subunit protein uS4c (201 aa).

Positions 89–152 (MRLDNILFRL…NSRTLVQNLL (64 aa)) constitute an S4 RNA-binding domain.

This sequence belongs to the universal ribosomal protein uS4 family. Part of the 30S ribosomal subunit. Contacts protein S5. The interaction surface between S4 and S5 is involved in control of translational fidelity.

The protein localises to the plastid. Its subcellular location is the chloroplast. Its function is as follows. One of the primary rRNA binding proteins, it binds directly to 16S rRNA where it nucleates assembly of the body of the 30S subunit. Functionally, with S5 and S12 plays an important role in translational accuracy. The protein is Small ribosomal subunit protein uS4c (rps4) of Capsella bursa-pastoris (Shepherd's purse).